The sequence spans 264 residues: 3-methyl-2-oxobutanoate hydroxymethyltransferase (264 aa).

Residues aspartate 45 and aspartate 84 each contribute to the Mg(2+) site. 3-methyl-2-oxobutanoate-binding positions include 45-46 (DS), aspartate 84, and lysine 112. Glutamate 114 is a binding site for Mg(2+). The Proton acceptor role is filled by glutamate 181.

It belongs to the PanB family. As to quaternary structure, homodecamer; pentamer of dimers. Mg(2+) serves as cofactor.

Its subcellular location is the cytoplasm. The catalysed reaction is 3-methyl-2-oxobutanoate + (6R)-5,10-methylene-5,6,7,8-tetrahydrofolate + H2O = 2-dehydropantoate + (6S)-5,6,7,8-tetrahydrofolate. It participates in cofactor biosynthesis; (R)-pantothenate biosynthesis; (R)-pantoate from 3-methyl-2-oxobutanoate: step 1/2. Its function is as follows. Catalyzes the reversible reaction in which hydroxymethyl group from 5,10-methylenetetrahydrofolate is transferred onto alpha-ketoisovalerate to form ketopantoate. This is 3-methyl-2-oxobutanoate hydroxymethyltransferase from Colwellia psychrerythraea (strain 34H / ATCC BAA-681) (Vibrio psychroerythus).